Reading from the N-terminus, the 217-residue chain is UPF0319 protein HSM_0266 (217 aa).

The N-terminal stretch at 1–21 (MKFSFAALASAMLLTSTAAFA) is a signal peptide.

The protein belongs to the UPF0319 family.

This Histophilus somni (strain 2336) (Haemophilus somnus) protein is UPF0319 protein HSM_0266.